The following is a 154-amino-acid chain: Ribonuclease 8 (154 aa).

A signal peptide spans M1–A27. H42 functions as the Proton acceptor in the catalytic mechanism. 2 disulfides stabilise this stretch: C64–C118 and C89–C96. Substrate is bound by residues K65–T69 and K90. H149 functions as the Proton donor in the catalytic mechanism.

It belongs to the pancreatic ribonuclease family.

It localises to the secreted. In terms of biological role, has a low ribonuclease activity. The polypeptide is Ribonuclease 8 (RNASE8) (Chlorocebus aethiops (Green monkey)).